Consider the following 267-residue polypeptide: Hydrolase FUB4 (267 aa).

Catalysis depends on charge relay system residues Ser-93, Asp-183, and His-243.

It belongs to the AB hydrolase 3 family.

The protein operates within mycotoxin biosynthesis. In terms of biological role, hydrolase; part of the gene cluster that mediates the biosynthesis of fusaric acid, a mycotoxin with low to moderate toxicity to animals and humans, but with high phytotoxic properties. L-aspartate is suggested as fusaric acid amino acid precursor that is activated and further processed to O-acetyl-L-homoserine by cluster enzymes aspartate kinase FUB3 and homoserine O-acetyltransferase FUB5, as well as enzymes of the primary metabolism. The polyketide synthase (PKS) FUB1 generates the triketide trans-2-hexenal which is presumptively released by the hydrolase FUB4 and linked to the NRPS-bound amino acid precursor by NAD(P)-dependent dehydrogenase FUB6. FUB1, FUB4, and the non-canonical NRPS Fub8 may form an enzyme complex. Further processing of the NRPS-bound intermediate might be carried out by FUB6 and the sulfhydrylase FUB7, enabling a spontaneous electrocyclization to close the carbon backbone of fusaric acid. Dihydrofusaric acid is likely to be released via reduction by the thioester reductase (TR) domain of FUB8 whereupon the final oxidation to fusaric acid may (also) be performed by the FMN-dependent dehydrogenase FUB9. The chain is Hydrolase FUB4 from Gibberella moniliformis (strain M3125 / FGSC 7600) (Maize ear and stalk rot fungus).